The chain runs to 156 residues: Small ribosomal subunit protein uS7 (156 aa).

The protein belongs to the universal ribosomal protein uS7 family. Part of the 30S ribosomal subunit. Contacts proteins S9 and S11.

In terms of biological role, one of the primary rRNA binding proteins, it binds directly to 16S rRNA where it nucleates assembly of the head domain of the 30S subunit. Is located at the subunit interface close to the decoding center, probably blocks exit of the E-site tRNA. The sequence is that of Small ribosomal subunit protein uS7 from Pelobacter propionicus (strain DSM 2379 / NBRC 103807 / OttBd1).